Reading from the N-terminus, the 839-residue chain is Probable inorganic carbon transporter subunit DabA (839 aa).

Zn(2+) is bound by residues Cys353, Asp355, His537, and Cys552.

Belongs to the inorganic carbon transporter (TC 9.A.2) DabA family. As to quaternary structure, forms a complex with DabB. Zn(2+) serves as cofactor.

It localises to the cell membrane. Functionally, part of an energy-coupled inorganic carbon pump. In Chloroflexus aggregans (strain MD-66 / DSM 9485), this protein is Probable inorganic carbon transporter subunit DabA.